A 400-amino-acid chain; its full sequence is Putative F-box protein At5g41510 (400 aa).

An F-box domain is found at 2 to 47; sequence ATMISNLPRDLIEEIFSRVPLTSMKAVRLTCKSWNNLSKSESFTKV.

In Arabidopsis thaliana (Mouse-ear cress), this protein is Putative F-box protein At5g41510.